Here is a 171-residue protein sequence, read N- to C-terminus: uncharacterized protein (171 aa).

2 consecutive transmembrane segments (helical) span residues 13 to 35 (VGAS…IATA) and 50 to 72 (ATVL…AYVV).

The protein resides in the cell membrane. This is an uncharacterized protein from Treponema pallidum (strain Nichols).